The chain runs to 877 residues: Translation initiation factor IF-2 (877 aa).

Residues 66 to 115 (PKKESTAKKTTKKDEVKKEEKKTTTKKESKNPAKAVSEKKDEVKKEEKQP) are compositionally biased toward basic and acidic residues. Disordered regions lie at residues 66–127 (PKKE…LEEK), 187–208 (SDESLKRKKKEKKNHPVASKKE), and 241–290 (ENKP…KESE). Positions 192–201 (KRKKKEKKNH) are enriched in basic residues. A compositionally biased stretch (polar residues) spans 245–265 (AQPTNKKQPNILKQSLNNSIN). The tr-type G domain occupies 376–543 (QRAPVITIMG…IVLLQADILE (168 aa)). The interval 385–392 (GHVDHGKT) is G1. 385 to 392 (GHVDHGKT) lines the GTP pocket. Residues 410 to 414 (GITQH) are G2. Positions 431 to 434 (DTPG) are G3. Residues 431-435 (DTPGH) and 485-488 (NKMD) contribute to the GTP site. The G4 stretch occupies residues 485-488 (NKMD). A G5 region spans residues 521 to 523 (SAK).

This sequence belongs to the TRAFAC class translation factor GTPase superfamily. Classic translation factor GTPase family. IF-2 subfamily.

Its subcellular location is the cytoplasm. One of the essential components for the initiation of protein synthesis. Protects formylmethionyl-tRNA from spontaneous hydrolysis and promotes its binding to the 30S ribosomal subunits. Also involved in the hydrolysis of GTP during the formation of the 70S ribosomal complex. The polypeptide is Translation initiation factor IF-2 (Campylobacter lari (strain RM2100 / D67 / ATCC BAA-1060)).